The chain runs to 408 residues: Phosphoglycerate kinase (408 aa).

Substrate contacts are provided by residues 24 to 26, Arg40, 63 to 66, Arg122, and Arg166; these read DLN and HLGR. ATP is bound by residues Lys216, Gly304, Glu335, and 364–367; that span reads GGDS.

The protein belongs to the phosphoglycerate kinase family. Monomer.

The protein resides in the cytoplasm. It carries out the reaction (2R)-3-phosphoglycerate + ATP = (2R)-3-phospho-glyceroyl phosphate + ADP. It functions in the pathway carbohydrate degradation; glycolysis; pyruvate from D-glyceraldehyde 3-phosphate: step 2/5. The protein is Phosphoglycerate kinase of Mycolicibacterium smegmatis (strain ATCC 700084 / mc(2)155) (Mycobacterium smegmatis).